The sequence spans 486 residues: E3 ubiquitin-protein ligase TRIM50 (486 aa).

The segment at 16–57 (CPVCLEVFKEPLMLQCGHSYCKGCLLSLSRHLDSELRCPVCR) adopts an RING-type zinc-finger fold. The segment at 84–125 (PEPQVCTHHRNPLSLFCEKDQELICGLCGLLGSHQHHRVTPV) adopts a B box-type zinc-finger fold. Zn(2+) is bound by residues C89, H92, C111, and H117. Coiled coils occupy residues 125-170 (VSTV…ESDV) and 204-235 (LVASLDMQLEQARGAQERLAQATCMLEQFGNE). The B30.2/SPRY domain maps to 275-474 (DIKLTVWKRL…LPMVLPLPSG (200 aa)). N6-acetyllysine is present on K372.

This sequence belongs to the TRIM/RBCC family. As to quaternary structure, can form dimers and trimers. Interacts with several E2 ubiquitin-conjugating enzymes, including UBE2L6, UBE2E1, UBE2E3. No interaction with UBE2H. Interacts with BECN1. Interacts with SQSTM1. Interacts with NLRP3. In terms of processing, auto-ubiquitinated. Acetylated by EP300 and KAT2B. HDAC6 drives TRIM50 deacetylation. Acetylation antagonizes with TRIM50 ubiquitination.

Its subcellular location is the cytoplasm. The enzyme catalyses S-ubiquitinyl-[E2 ubiquitin-conjugating enzyme]-L-cysteine + [acceptor protein]-L-lysine = [E2 ubiquitin-conjugating enzyme]-L-cysteine + N(6)-ubiquitinyl-[acceptor protein]-L-lysine.. In terms of biological role, E3 ubiquitin-protein ligase that ubiquitinates Beclin-1/BECN1 in a 'Lys-63'-dependent manner enhancing its binding to ULK1. In turn, promotes starvation-induced autophagy activation. Also interacts with p62/SQSTM1 protein and thereby induces the formation and the autophagy clearance of aggresome-associated polyubiquitinated proteins through HDAC6 interaction. Also promotes NLRP3 inflammasome activation by directly inducing NLRP3 oligomerization independent of its E3 ligase function. In Sus scrofa (Pig), this protein is E3 ubiquitin-protein ligase TRIM50 (TRIM50).